Reading from the N-terminus, the 419-residue chain is GTPase Obg (419 aa).

Positions 1 to 158 (MHFVDEAFNE…FKIKTELKVL (158 aa)) constitute an Obg domain. Residues 159 to 324 (ADIGLLGFPS…LKYKMSSFLQ (166 aa)) form the OBG-type G domain. Residues 165–172 (GFPSVGKS), 190–194 (FTTIK), 211–214 (DLPG), 278–281 (NKMD), and 305–307 (SLV) each bind GTP. Positions 172 and 192 each coordinate Mg(2+). Residues 342-419 (TLTDNLKTIS…KICDRLFDFL (78 aa)) form the OCT domain.

The protein belongs to the TRAFAC class OBG-HflX-like GTPase superfamily. OBG GTPase family. As to quaternary structure, monomer. Requires Mg(2+) as cofactor.

It localises to the cytoplasm. Functionally, an essential GTPase which binds GTP, GDP and possibly (p)ppGpp with moderate affinity, with high nucleotide exchange rates and a fairly low GTP hydrolysis rate. Plays a role in control of the cell cycle, stress response, ribosome biogenesis and in those bacteria that undergo differentiation, in morphogenesis control. The protein is GTPase Obg of Aster yellows witches'-broom phytoplasma (strain AYWB).